The chain runs to 64 residues: MAQEQTKRGGGGGDDDDIAGSTAAGQERREKLTEETDDLLDEIDDVLEENAEDFVRAYVQKGGQ.

The segment at 1-37 is disordered; that stretch reads MAQEQTKRGGGGGDDDDIAGSTAAGQERREKLTEETD. The segment at 21-58 is ARC ATPase binding; the sequence is STAAGQERREKLTEETDDLLDEIDDVLEENAEDFVRAY. A coiled-coil region spans residues 23–52; that stretch reads AAGQERREKLTEETDDLLDEIDDVLEENAE. The residue at position 64 (Q64) is a Deamidated glutamine. An Isoglutamyl lysine isopeptide (Gln-Lys) (interchain with K-? in acceptor proteins) cross-link involves residue Q64.

It belongs to the prokaryotic ubiquitin-like protein family. In terms of assembly, strongly interacts with the proteasome-associated ATPase ARC through a hydrophobic interface; the interacting region of Pup lies in its C-terminal half. There is one Pup binding site per ARC hexamer ring. In terms of processing, is modified by deamidation of its C-terminal glutamine to glutamate by the deamidase Dop, a prerequisite to the subsequent pupylation process.

It functions in the pathway protein degradation; proteasomal Pup-dependent pathway. Protein modifier that is covalently attached to lysine residues of substrate proteins, thereby targeting them for proteasomal degradation. The tagging system is termed pupylation. This chain is Prokaryotic ubiquitin-like protein Pup, found in Mycobacterium tuberculosis (strain ATCC 25177 / H37Ra).